The sequence spans 359 residues: tRNA-specific 2-thiouridylase MnmA (359 aa).

ATP contacts are provided by residues 7–14 (AMSGGVDS) and M33. Residue C101 is the Nucleophile of the active site. A disulfide bridge connects residues C101 and C198. G125 lines the ATP pocket. The interval 148–150 (KDQ) is interaction with tRNA. C198 acts as the Cysteine persulfide intermediate in catalysis.

This sequence belongs to the MnmA/TRMU family.

Its subcellular location is the cytoplasm. The catalysed reaction is S-sulfanyl-L-cysteinyl-[protein] + uridine(34) in tRNA + AH2 + ATP = 2-thiouridine(34) in tRNA + L-cysteinyl-[protein] + A + AMP + diphosphate + H(+). Its function is as follows. Catalyzes the 2-thiolation of uridine at the wobble position (U34) of tRNA, leading to the formation of s(2)U34. The protein is tRNA-specific 2-thiouridylase MnmA of Chloroflexus aurantiacus (strain ATCC 29366 / DSM 635 / J-10-fl).